Reading from the N-terminus, the 372-residue chain is N-methyl-L-tryptophan oxidase (372 aa).

4 to 34 (DLIIIGSGSVGAAAGYYATRAGLNVLMTDAH) serves as a coordination point for FAD. Cys-308 bears the S-8alpha-FAD cysteine mark.

The protein belongs to the MSOX/MTOX family. MTOX subfamily. In terms of assembly, monomer. FAD serves as cofactor.

It catalyses the reaction N(alpha)-methyl-L-tryptophan + O2 + H2O = L-tryptophan + formaldehyde + H2O2. Its function is as follows. Catalyzes the oxidative demethylation of N-methyl-L-tryptophan. The polypeptide is N-methyl-L-tryptophan oxidase (Escherichia coli O7:K1 (strain IAI39 / ExPEC)).